Here is a 336-residue protein sequence, read N- to C-terminus: Polyprenyl transferase dpasC (336 aa).

Residues Leu-34–Phe-54 form a helical membrane-spanning segment. Asn-66 carries N-linked (GlcNAc...) asparagine glycosylation. A run of 7 helical transmembrane segments spans residues Ala-80–Ile-100, Gln-125–Leu-145, Tyr-181–Gly-201, Phe-205–Phe-225, His-253–Leu-273, Asn-274–Leu-294, and Leu-311–Leu-331.

The protein belongs to the UbiA prenyltransferase family. Mg(2+) serves as cofactor.

It is found in the membrane. It functions in the pathway secondary metabolite biosynthesis; terpenoid biosynthesis. Functionally, polyprenyl transferase; part of the gene cluster that mediates the biosynthesis of the diterpenoid pyrones subglutinols A and B. The first step of the pathway is the synthesis of the alpha-pyrone moiety by the polyketide synthase dpasA via condensation of one acetyl-CoA starter unit with 3 malonyl-CoA units and 2 methylations. The alpha-pyrone is then combined with geranylgeranyl pyrophosphate (GGPP) formed by the GGPP synthase dpasD through the action of the prenyltransferase dpasC to yield a linear alpha-pyrone diterpenoid. Subsequent steps in the diterpenoid pyrone biosynthetic pathway involve the decalin core formation, which is initiated by the epoxidation of the C10-C11 olefin by the FAD-dependent oxidoreductase dpasE, and is followed by a cyclization cascade catalyzed by the terpene cyclase dpasB. The FAD-linked oxidoreductase dpasF is then involved in tetrahydrofuran (THF) ring formation at the C5 unit to complete the formation of subglutinols A and B. DpasF possesses also an additional catalytic ability of multi-step oxidations to generate a new DDP analog with an enone system at the C5 named FDDP A. This chain is Polyprenyl transferase dpasC, found in Apiospora sacchari (Arthrinium sacchari).